A 404-amino-acid polypeptide reads, in one-letter code: Serpin-Z2B (404 aa).

The interval 349 to 373 (GTEAAAATACTMKFLCLTLTSPVDF) is RCL.

Belongs to the serpin family.

Probable serine protease inhibitor. This chain is Serpin-Z2B, found in Oryza sativa subsp. japonica (Rice).